Reading from the N-terminus, the 425-residue chain is MDRNKEIFEESKKYMPGGVNSPVRSFGSVGINPPVIKSGKGAMIKDENGNEYIDFVLAWGPMILGHCDEDVVEAIKKTSEESIAFGASTKLELDLAKLLCETLDNVDMIRMVNSGTEATMSAVKLARGYTKKDKIIKFAGCYHGHFDGFLIEAGSGVLTEGIPGCLGVPEESIKNTLIGIYNDEKQVEELFEKYGNDIAGIIIEPVAGNMGVVKCDPKFMRKLRELCDKYGALLIFDEVMCGFRVAYKGAQTLFDVKPDLVTYAKIMGGGLPCGAYGGRREIMENLSPLGGVYQAGTMSGNPIVMSAGLATVKKLYENPSYYNHIEKIGSKLEKGVLEIAKKKGLGLVVNRQGGMITLFFTDLKEVKCYDDVKTCDGERFKRYFLHMLNKGFNIPPSQFEAMFLSVKHTEEHIDKFLEAFETFEG.

Lys265 carries the N6-(pyridoxal phosphate)lysine modification.

This sequence belongs to the class-III pyridoxal-phosphate-dependent aminotransferase family. HemL subfamily. Homodimer. It depends on pyridoxal 5'-phosphate as a cofactor.

It is found in the cytoplasm. The enzyme catalyses (S)-4-amino-5-oxopentanoate = 5-aminolevulinate. It participates in porphyrin-containing compound metabolism; protoporphyrin-IX biosynthesis; 5-aminolevulinate from L-glutamyl-tRNA(Glu): step 2/2. In Clostridium perfringens (strain 13 / Type A), this protein is Glutamate-1-semialdehyde 2,1-aminomutase.